We begin with the raw amino-acid sequence, 193 residues long: MNFLAHLHLAHLAESSLSGNLLADFVRGNPEESFPPDVVAGIHMHRRIDVLTDNLPEVREAREWFRSETRRVAPITLDVMWDHFLSRHWSQLSPDFPLQEFVCYAREQVMTILPDSPPRFINLNNYLWSEQWLVRYRDMDFIQNVLNGMASRRPRLDALRDSWYDLDAHYAALETRFWQFYPRMMAQASRKAL.

It belongs to the AcpH family.

It catalyses the reaction holo-[ACP] + H2O = apo-[ACP] + (R)-4'-phosphopantetheine + H(+). In terms of biological role, converts holo-ACP to apo-ACP by hydrolytic cleavage of the phosphopantetheine prosthetic group from ACP. The polypeptide is Acyl carrier protein phosphodiesterase (Escherichia coli O157:H7).